Consider the following 287-residue polypeptide: Beta-lactamase GES-2 (287 aa).

A signal peptide spans 1–18 (MRFIHALLLAGIAHSAYA). Cysteines 63 and 233 form a disulfide. Ser-64 functions as the Nucleophile; acyl-ester intermediate in the catalytic mechanism. A beta-lactam-binding residues include Lys-67, Ser-125, and Glu-161.

It belongs to the class-A beta-lactamase family.

The enzyme catalyses a beta-lactam + H2O = a substituted beta-amino acid. Inhibited by the beta-lactamase-blocking agents clavulanic acid, sulbactam and tazobactam. Functionally, extended-spectrum beta-lactamase (ESBL) which confers resistance to penicillins, as well as first, third and fourth-generation cephalosporins. Has modest carbapenem-hydrolyzing activity. Has cefotaxime-hydrolyzing activity. In Pseudomonas aeruginosa, this protein is Beta-lactamase GES-2.